A 159-amino-acid chain; its full sequence is Growth arrest and DNA damage-inducible protein GADD45 gamma (159 aa).

The homodimerization stretch occupies residues 43-86; the sequence is VYESAKVLNVDPDNVTFCVLAAGEEDEGDIALQIHFTLIQAFCC.

It belongs to the GADD45 family. Undergoes concentration-dependent homodimerization, which is required for growth inhibititory activity and enhances interaction with PCNA. Interacts with GADD45GIP1. Interacts with PCNA.

Involved in the regulation of growth and apoptosis. Mediates activation of stress-responsive MTK1/MEKK4 MAPKKK. The sequence is that of Growth arrest and DNA damage-inducible protein GADD45 gamma (GADD45G) from Homo sapiens (Human).